We begin with the raw amino-acid sequence, 395 residues long: Flagellin A (395 aa).

Belongs to the bacterial flagellin family.

It is found in the secreted. It localises to the bacterial flagellum. In terms of biological role, flagellin is the subunit protein which polymerizes to form the filaments of bacterial flagella. Homomer of FlaA is able to form a functional filament. The polypeptide is Flagellin A (flaA) (Rhizobium meliloti (Ensifer meliloti)).